We begin with the raw amino-acid sequence, 341 residues long: DNA-directed RNA polymerase subunit alpha (341 aa).

The tract at residues 1–237 (MLSLSKNWNA…EQLQLFISFE (237 aa)) is alpha N-terminal domain (alpha-NTD). An alpha C-terminal domain (alpha-CTD) region spans residues 247–341 (TDALPFSPYL…LSKRYEDSYN (95 aa)).

It belongs to the RNA polymerase alpha chain family. Homodimer. The RNAP catalytic core consists of 2 alpha, 1 beta, 1 beta' and 1 omega subunit. When a sigma factor is associated with the core the holoenzyme is formed, which can initiate transcription.

The enzyme catalyses RNA(n) + a ribonucleoside 5'-triphosphate = RNA(n+1) + diphosphate. Functionally, DNA-dependent RNA polymerase catalyzes the transcription of DNA into RNA using the four ribonucleoside triphosphates as substrates. This Rickettsia bellii (strain RML369-C) protein is DNA-directed RNA polymerase subunit alpha.